Here is a 115-residue protein sequence, read N- to C-terminus: NADH-ubiquinone oxidoreductase chain 3 (115 aa).

3 consecutive transmembrane segments (helical) span residues Leu3–Trp23, Phe55–Leu75, and Leu84–Tyr104.

It belongs to the complex I subunit 3 family. In terms of assembly, core subunit of respiratory chain NADH dehydrogenase (Complex I) which is composed of 45 different subunits. Interacts with TMEM186. Interacts with TMEM242.

The protein resides in the mitochondrion inner membrane. It carries out the reaction a ubiquinone + NADH + 5 H(+)(in) = a ubiquinol + NAD(+) + 4 H(+)(out). Its function is as follows. Core subunit of the mitochondrial membrane respiratory chain NADH dehydrogenase (Complex I) which catalyzes electron transfer from NADH through the respiratory chain, using ubiquinone as an electron acceptor. Essential for the catalytic activity of complex I. This Papio hamadryas (Hamadryas baboon) protein is NADH-ubiquinone oxidoreductase chain 3.